The sequence spans 177 residues: Large ribosomal subunit protein uL6 (177 aa).

This sequence belongs to the universal ribosomal protein uL6 family. Part of the 50S ribosomal subunit.

In terms of biological role, this protein binds to the 23S rRNA, and is important in its secondary structure. It is located near the subunit interface in the base of the L7/L12 stalk, and near the tRNA binding site of the peptidyltransferase center. This is Large ribosomal subunit protein uL6 from Bradyrhizobium sp. (strain ORS 278).